Here is a 78-residue protein sequence, read N- to C-terminus: Sec-independent protein translocase protein TatA (78 aa).

Residues Met-1–Gly-21 form a helical membrane-spanning segment. Residues Lys-40–Val-78 are disordered. The segment covering Glu-46–Val-78 has biased composition (basic and acidic residues).

It belongs to the TatA/E family. In terms of assembly, the Tat system comprises two distinct complexes: a TatABC complex, containing multiple copies of TatA, TatB and TatC subunits, and a separate TatA complex, containing only TatA subunits. Substrates initially bind to the TatABC complex, which probably triggers association of the separate TatA complex to form the active translocon.

The protein localises to the cell inner membrane. In terms of biological role, part of the twin-arginine translocation (Tat) system that transports large folded proteins containing a characteristic twin-arginine motif in their signal peptide across membranes. TatA could form the protein-conducting channel of the Tat system. The protein is Sec-independent protein translocase protein TatA of Shewanella sediminis (strain HAW-EB3).